Here is a 365-residue protein sequence, read N- to C-terminus: Mitogen-activated protein kinase HOG1A (365 aa).

The 280-residue stretch at 24–303 (YTDLQPVGMG…AADALAHPYL (280 aa)) folds into the Protein kinase domain. ATP-binding positions include 30-38 (VGMGAFGLL) and lysine 53. Aspartate 145 acts as the Proton acceptor in catalysis. Threonine 175 carries the post-translational modification Phosphothreonine. The TXY motif lies at 175–177 (TGY). Tyrosine 177 bears the Phosphotyrosine mark.

This sequence belongs to the protein kinase superfamily. Ser/Thr protein kinase family. MAP kinase subfamily. HOG1 sub-subfamily. It depends on Mg(2+) as a cofactor. Phosphorylated. Dually phosphorylated on Thr-175 and Tyr-177, which activates the enzyme. Rapidly dephosphorylated upon either hypo- or hyperosmotic shock.

Its subcellular location is the cytoplasm. It is found in the nucleus. It catalyses the reaction L-seryl-[protein] + ATP = O-phospho-L-seryl-[protein] + ADP + H(+). The enzyme catalyses L-threonyl-[protein] + ATP = O-phospho-L-threonyl-[protein] + ADP + H(+). Activated by tyrosine and threonine phosphorylation. Functionally, proline-directed serine/threonine-protein kinase involved in a signal transduction pathway that is activated by changes in the osmolarity of the extracellular environment. Controls osmotic regulation of transcription of target genes. This Wallemia ichthyophaga (strain EXF-994 / CBS 113033) protein is Mitogen-activated protein kinase HOG1A (HOG1A).